A 790-amino-acid chain; its full sequence is Histone-lysine N-methyltransferase, H3 lysine-9 specific SUVH6 (790 aa).

Residues 251–271 (QLRILGVGTSSGSSSGDSSRN) are disordered. A compositionally biased stretch (low complexity) spans 256 to 268 (GVGTSSGSSSGDS). Residues 330-482 (GEVPGVEVGD…MNVFKFQLRR (153 aa)) form the YDG domain. One can recognise a Pre-SET domain in the interval 551–613 (KSCCCTTRCT…SCYLRVTQHG (63 aa)). Positions 553, 554, 555, 559, 567, 569, 595, 599, 601, and 605 each coordinate Zn(2+). The region spanning 616–760 (LPLEIFKTKS…PLQELCYDYN (145 aa)) is the SET domain. Residues 626 to 628 (RGW), aspartate 662, tyrosine 664, arginine 714, and 717 to 718 (NH) each bind S-adenosyl-L-methionine. Positions 720, 778, 780, and 785 each coordinate Zn(2+). One can recognise a Post-SET domain in the interval 774 to 790 (KQKPCFCGAAVCRRRLY).

This sequence belongs to the class V-like SAM-binding methyltransferase superfamily. Histone-lysine methyltransferase family. Suvar3-9 subfamily.

The protein localises to the nucleus. It localises to the chromosome. Its subcellular location is the centromere. The enzyme catalyses N(6)-methyl-L-lysyl(9)-[histone H3] + S-adenosyl-L-methionine = N(6),N(6)-dimethyl-L-lysyl(9)-[histone H3] + S-adenosyl-L-homocysteine + H(+). It carries out the reaction L-lysyl(9)-[histone H3] + S-adenosyl-L-methionine = N(6)-methyl-L-lysyl(9)-[histone H3] + S-adenosyl-L-homocysteine + H(+). Functionally, histone methyltransferase. Methylates 'Lys-9' of histone H3. H3 'Lys-9' methylation represents a specific tag for epigenetic transcriptional repression. Seems to act preferentially on dsMRNA. The sequence is that of Histone-lysine N-methyltransferase, H3 lysine-9 specific SUVH6 (SUVH6) from Arabidopsis thaliana (Mouse-ear cress).